The chain runs to 276 residues: Protease HtpX homolog (276 aa).

Residues 16-36 (LFIWFGGMIAGQTGMVIAFLV) traverse the membrane as a helical segment. Histidine 130 is a binding site for Zn(2+). Glutamate 131 is an active-site residue. Histidine 134 lines the Zn(2+) pocket. Transmembrane regions (helical) follow at residues 142–162 (IGTVAATIAGAIAMLANFGMF) and 173–193 (IFVMLALMFIMPMAASIIQMT). Glutamate 199 is a binding site for Zn(2+).

This sequence belongs to the peptidase M48B family. Requires Zn(2+) as cofactor.

The protein localises to the cell inner membrane. The polypeptide is Protease HtpX homolog (Sulfurovum sp. (strain NBC37-1)).